We begin with the raw amino-acid sequence, 262 residues long: Glutamate racemase (262 aa).

Residues 10-11 (DS) and 42-43 (FG) each bind substrate. Residue Cys-74 is the Proton donor/acceptor of the active site. 75–76 (NT) contacts substrate. Cys-189 serves as the catalytic Proton donor/acceptor. Residue 190–191 (TH) coordinates substrate.

It belongs to the aspartate/glutamate racemases family.

The enzyme catalyses L-glutamate = D-glutamate. The protein operates within cell wall biogenesis; peptidoglycan biosynthesis. Functionally, provides the (R)-glutamate required for cell wall biosynthesis. This chain is Glutamate racemase, found in Mesorhizobium japonicum (strain LMG 29417 / CECT 9101 / MAFF 303099) (Mesorhizobium loti (strain MAFF 303099)).